The primary structure comprises 426 residues: MTSSVIAQSVFPYRQLLVGFSGGLDSTVLLHRLMLWREQEPDVQIRAIHVHHGLSSNADHWVAHCESLCKSWHIPLIVERVKLRDEGLGTEAQARKARYLAFEKTLQAGEALVTAQHLDDQCETFLLALKRGSGPAGLSAMPVRTEFAGSQLIRPLLGETRTSLEKWAQDYNLCWIDDESNQDDRYDRNFLRLRVLPLLSERWPHFADATARSAALCAEQESLLDELLTEELASVISTEGRLRIEPLEAMSPVRRAALIRRWLAAHHAQMPSRTMLNRIWEEVALAREDATPRLHLGGFEVRRYKGELWWVKYQPTMIDQIIEWRDPSVTLMLPQGSVCFADGGHIRLPNPDEQVTIRFKACGILHIVGRHGGRKLKKIWQEYNIPPWLRDTTPLLFYGETLIAAAGVFVTKEGWIEKGVQLEWKA.

21-26 (SGGLDS) contacts ATP.

The protein belongs to the tRNA(Ile)-lysidine synthase family.

It localises to the cytoplasm. It catalyses the reaction cytidine(34) in tRNA(Ile2) + L-lysine + ATP = lysidine(34) in tRNA(Ile2) + AMP + diphosphate + H(+). Ligates lysine onto the cytidine present at position 34 of the AUA codon-specific tRNA(Ile) that contains the anticodon CAU, in an ATP-dependent manner. Cytidine is converted to lysidine, thus changing the amino acid specificity of the tRNA from methionine to isoleucine. This is tRNA(Ile)-lysidine synthase from Enterobacter sp. (strain 638).